The primary structure comprises 855 residues: Pre-mRNA-splicing factor SYF1 (855 aa).

9 HAT repeats span residues 15–47 (LVFE…FKQG), 48–80 (APKP…ARRA), 90–122 (PAYE…FLMD), 124–158 (GRVT…FLRS), 160–192 (PLPE…SSDR), 198–230 (QRLA…LISQ), 235–268 (VQSL…YYIR), 270–305 (GHFE…FEES), and 369–407 (GRPR…FYED). K420 carries the N6-acetyllysine modification. 5 HAT repeats span residues 498–530 (GTFQ…FLEE), 532–566 (KYFE…KFIS), 571–605 (RKLE…LEEE), 643–677 (YGVT…MECK), and 679–713 (GEID…FEVR). The tract at residues 808-855 (AELAQQANPEEIQLGEDEDEDEMDLEPNEVRLEQQSVPAAVFGSLKED) is disordered. Positions 820 to 834 (QLGEDEDEDEMDLEP) are enriched in acidic residues. S851 is subject to Phosphoserine.

It belongs to the crooked-neck family. In terms of assembly, associates with RNA polymerase II, the TCR-specific proteins CKN1/CSA and ERCC6/CSB, and XPA. Identified in the spliceosome C complex. Component of the XAB2 complex, a multimeric protein complex composed of XAB2, PRPF19, AQR, ZNF830, ISY1, and PPIE. Identified in a pentameric intron-binding (IB) complex composed of AQR, XAB2, ISY1, ZNF830 and PPIE that is incorporated into the spliceosome as a preassembled complex. The IB complex does not contain PRPF19.

It localises to the nucleus. Its function is as follows. Involved in pre-mRNA splicing as component of the spliceosome. Involved in transcription-coupled repair (TCR), transcription and pre-mRNA splicing. This chain is Pre-mRNA-splicing factor SYF1 (Xab2), found in Rattus norvegicus (Rat).